The following is a 433-amino-acid chain: Chaperone SurA (433 aa).

An N-terminal signal peptide occupies residues 1–24 (MKYRIKALLLASSLIITTITSVQA). 2 consecutive PpiC domains span residues 175–276 (NVEY…KVLD) and 285–384 (VEEV…KLED).

It is found in the periplasm. It carries out the reaction [protein]-peptidylproline (omega=180) = [protein]-peptidylproline (omega=0). In terms of biological role, chaperone involved in the correct folding and assembly of outer membrane proteins. Recognizes specific patterns of aromatic residues and the orientation of their side chains, which are found more frequently in integral outer membrane proteins. May act in both early periplasmic and late outer membrane-associated steps of protein maturation. This Colwellia psychrerythraea (strain 34H / ATCC BAA-681) (Vibrio psychroerythus) protein is Chaperone SurA.